The primary structure comprises 305 residues: Tyrosine recombinase XerC (305 aa).

Positions 1-94 constitute a Core-binding (CB) domain; the sequence is MSSVDEFLTY…ACRSYYAWLL (94 aa). Residues 115–292 enclose the Tyr recombinase domain; that stretch reads KLPQVLDADE…DFQHLAKVYD (178 aa). Catalysis depends on residues R154, K178, H244, R247, and H270. Y279 (O-(3'-phospho-DNA)-tyrosine intermediate) is an active-site residue.

It belongs to the 'phage' integrase family. XerC subfamily. In terms of assembly, forms a cyclic heterotetrameric complex composed of two molecules of XerC and two molecules of XerD.

It is found in the cytoplasm. In terms of biological role, site-specific tyrosine recombinase, which acts by catalyzing the cutting and rejoining of the recombining DNA molecules. The XerC-XerD complex is essential to convert dimers of the bacterial chromosome into monomers to permit their segregation at cell division. It also contributes to the segregational stability of plasmids. This Xanthomonas axonopodis pv. citri (strain 306) protein is Tyrosine recombinase XerC.